We begin with the raw amino-acid sequence, 476 residues long: Bifunctional protein HldE (476 aa).

Residues 1-318 form a ribokinase region; that stretch reads MKPTLPNYDQ…AEAIHGSQDS (318 aa). 195-198 is an ATP binding site; sequence NMLE. Asp-264 is an active-site residue. The interval 344-476 is cytidylyltransferase; that stretch reads MTNGCFDILH…IIEAIKGGRG (133 aa).

This sequence in the N-terminal section; belongs to the carbohydrate kinase PfkB family. It in the C-terminal section; belongs to the cytidylyltransferase family. In terms of assembly, homodimer.

The catalysed reaction is D-glycero-beta-D-manno-heptose 7-phosphate + ATP = D-glycero-beta-D-manno-heptose 1,7-bisphosphate + ADP + H(+). The enzyme catalyses D-glycero-beta-D-manno-heptose 1-phosphate + ATP + H(+) = ADP-D-glycero-beta-D-manno-heptose + diphosphate. Its pathway is nucleotide-sugar biosynthesis; ADP-L-glycero-beta-D-manno-heptose biosynthesis; ADP-L-glycero-beta-D-manno-heptose from D-glycero-beta-D-manno-heptose 7-phosphate: step 1/4. It participates in nucleotide-sugar biosynthesis; ADP-L-glycero-beta-D-manno-heptose biosynthesis; ADP-L-glycero-beta-D-manno-heptose from D-glycero-beta-D-manno-heptose 7-phosphate: step 3/4. Functionally, catalyzes the phosphorylation of D-glycero-D-manno-heptose 7-phosphate at the C-1 position to selectively form D-glycero-beta-D-manno-heptose-1,7-bisphosphate. Its function is as follows. Catalyzes the ADP transfer from ATP to D-glycero-beta-D-manno-heptose 1-phosphate, yielding ADP-D-glycero-beta-D-manno-heptose. The sequence is that of Bifunctional protein HldE from Aliivibrio salmonicida (strain LFI1238) (Vibrio salmonicida (strain LFI1238)).